The chain runs to 255 residues: Hydroxyacylglutathione hydrolase (255 aa).

Residues His-53, His-55, Asp-57, His-58, His-110, Asp-127, and His-165 each coordinate Zn(2+).

It belongs to the metallo-beta-lactamase superfamily. Glyoxalase II family. As to quaternary structure, monomer. Zn(2+) is required as a cofactor.

The catalysed reaction is an S-(2-hydroxyacyl)glutathione + H2O = a 2-hydroxy carboxylate + glutathione + H(+). It participates in secondary metabolite metabolism; methylglyoxal degradation; (R)-lactate from methylglyoxal: step 2/2. In terms of biological role, thiolesterase that catalyzes the hydrolysis of S-D-lactoyl-glutathione to form glutathione and D-lactic acid. The polypeptide is Hydroxyacylglutathione hydrolase (Xanthomonas campestris pv. campestris (strain 8004)).